A 606-amino-acid polypeptide reads, in one-letter code: Melanoma-associated antigen D2 (606 aa).

2 disordered regions span residues 1–29 (MSDT…MMQT) and 52–204 (SEDV…GGRR). An N-acetylserine modification is found at S2. S5 carries the phosphoserine modification. A Phosphothreonine modification is found at T72. A compositionally biased stretch (polar residues) spans 79–100 (PATQASSTTQLTDTQVLATENK). Over residues 122–131 (ETKKVSHVAD) the composition is skewed to basic and acidic residues. Residues 142–164 (EAAPSQASADEPEPESAAAQSQE) show a composition bias toward low complexity. S157 carries the post-translational modification Phosphoserine. Over residues 171–181 (KVKAKKARKVK) the composition is skewed to basic residues. Phosphoserine occurs at positions 190, 191, 194, 197, 244, and 247. The span at 248-260 (PKARRGKARRRAA) shows a compositional bias: basic residues. Positions 248-275 (PKARRGKARRRAAKLQSSQEPEAPPPRD) are disordered. Residues S264 and S265 each carry the phosphoserine modification. The MAGE domain maps to 279-478 (LQGRANDLVK…KEWAAQYREA (200 aa)). The disordered stretch occupies residues 534–563 (GAEAKAKAQESGSASTGASTSTNNSASASA).

Interacts with GNAS.

Functionally, regulates the expression, localization to the plasma membrane and function of the sodium chloride cotransporters SLC12A1 and SLC12A3, two key components of salt reabsorption in the distal renal tubule. The sequence is that of Melanoma-associated antigen D2 (MAGED2) from Pongo abelii (Sumatran orangutan).